A 160-amino-acid polypeptide reads, in one-letter code: ATP synthase subunit b 3 (160 aa).

Residues Pro-5–Ala-25 traverse the membrane as a helical segment.

This sequence belongs to the ATPase B chain family. F-type ATPases have 2 components, F(1) - the catalytic core - and F(0) - the membrane proton channel. F(1) has five subunits: alpha(3), beta(3), gamma(1), delta(1), epsilon(1). F(0) has three main subunits: a(1), b(2) and c(10-14). The alpha and beta chains form an alternating ring which encloses part of the gamma chain. F(1) is attached to F(0) by a central stalk formed by the gamma and epsilon chains, while a peripheral stalk is formed by the delta and b chains.

Its subcellular location is the cell inner membrane. Its function is as follows. F(1)F(0) ATP synthase produces ATP from ADP in the presence of a proton or sodium gradient. F-type ATPases consist of two structural domains, F(1) containing the extramembraneous catalytic core and F(0) containing the membrane proton channel, linked together by a central stalk and a peripheral stalk. During catalysis, ATP synthesis in the catalytic domain of F(1) is coupled via a rotary mechanism of the central stalk subunits to proton translocation. Component of the F(0) channel, it forms part of the peripheral stalk, linking F(1) to F(0). This is ATP synthase subunit b 3 from Rhodospirillum centenum (strain ATCC 51521 / SW).